An 85-amino-acid chain; its full sequence is Putative membrane protein insertion efficiency factor (85 aa).

This sequence belongs to the UPF0161 family.

The protein resides in the cell membrane. Could be involved in insertion of integral membrane proteins into the membrane. The sequence is that of Putative membrane protein insertion efficiency factor from Baumannia cicadellinicola subsp. Homalodisca coagulata.